Reading from the N-terminus, the 462-residue chain is U2 small nuclear ribonucleoprotein auxiliary factor 35 kDa subunit-related protein 2 (462 aa).

A compositionally biased stretch (low complexity) spans 1–13; that stretch reads METAGATADATAG. Disordered stretches follow at residues 1-22, 44-66, and 115-138; these read META…RKKY, AELA…EEER, and WEEQ…EREE. A Glycyl lysine isopeptide (Lys-Gly) (interchain with G-Cter in SUMO2) cross-link involves residue lysine 49. Residues 57–66 are compositionally biased toward basic and acidic residues; the sequence is AEEKRLEEER. The C3H1-type 1 zinc finger occupies 170-198; sequence EKDRANCPFYSKTGACRFGDRCSRKHNFP. The RRM domain occupies 202–308; that stretch reads PTLLIKGMFT…RQLQCEFCPV (107 aa). The segment at 310–337 adopts a C3H1-type 2 zinc-finger fold; it reads RWKMAICGLFEVQQCPRGKHCNFLHVFR. The residue at position 353 (serine 353) is a Phosphoserine. The disordered stretch occupies residues 354–462; the sequence is PDWTSSSFGK…QPQPQPQSDP (109 aa). Residues 364-379 show a composition bias toward basic and acidic residues; the sequence is NSERRERASHYDEYYG. At serine 389 the chain carries Phosphoserine. Positions 392 to 403 are enriched in basic and acidic residues; the sequence is FYKRNGESDRKS. The span at 404–417 shows a compositional bias: basic residues; that stretch reads SSRHRVKKSHRYGM.

Component of the U11/U12 snRNPs that are part of the U12-type spliceosome. Interacts (via RS domain) with SRSF1 and SRSF2. Interacts with U2AF2/U2AF65. Post-translationally, phosphorylated in the RS domain by SRPK1.

The protein localises to the nucleus. Its function is as follows. Pre-mRNA-binding protein required for splicing of both U2- and U12-type introns. Selectively interacts with the 3'-splice site of U2- and U12-type pre-mRNAs and promotes different steps in U2 and U12 intron splicing. Recruited to U12 pre-mRNAs in an ATP-dependent manner and is required for assembly of the prespliceosome, a precursor to other spliceosomal complexes. For U2-type introns, it is selectively and specifically required for the second step of splicing. In Mus musculus (Mouse), this protein is U2 small nuclear ribonucleoprotein auxiliary factor 35 kDa subunit-related protein 2 (Zrsr2).